Consider the following 1202-residue polypeptide: Calmodulin-binding transcription activator 2 (1202 aa).

Positions R30–C155 form a DNA-binding region, CG-1. The Nuclear localization signal motif lies at R79–K86. Disordered stretches follow at residues S263–G322, G361–P409, and P421–G491. Positions P270–L283 are enriched in pro residues. Composition is skewed to low complexity over residues S289–S299 and T313–G322. Pro residues-rich tracts occupy residues S365 to A374 and P460 to L476. The 79-residue stretch at D537–R615 folds into the IPT/TIG domain. 3 ANK repeats span residues M712 to Q745, C757 to D787, and R791 to P821. 2 disordered regions span residues P817–M874 and P906–P929. Low complexity-rich tracts occupy residues S826–S846 and P906–S917. IQ domains lie at Y1049–I1078 and T1102–I1131.

The protein belongs to the CAMTA family. May interact with calmodulin. In terms of tissue distribution, detected in brain. Expressed at constant levels throughout the cell cycle in neuroblastoma cell lines.

It localises to the nucleus. Transcription activator. May act as tumor suppressor. In Homo sapiens (Human), this protein is Calmodulin-binding transcription activator 2 (CAMTA2).